The following is a 1887-amino-acid chain: Nuclear pore membrane glycoprotein 210 (1887 aa).

Residues M1–A26 form the signal peptide. The Perinuclear space portion of the chain corresponds to K27–Q1808. 12 N-linked (GlcNAc...) asparagine glycosylation sites follow: N44, N337, N405, N484, N681, N801, N926, N1039, N1116, N1135, N1362, and N1441. Positions F1078 to K1151 constitute a BIG2 domain. A helical transmembrane segment spans residues V1809 to H1829. Residues T1830 to H1887 are Cytoplasmic-facing. The residue at position 1844 (T1844) is a Phosphothreonine. The disordered stretch occupies residues P1853–H1887. 4 positions are modified to phosphoserine: S1874, S1877, S1881, and S1886.

Belongs to the NUP210 family. In terms of assembly, forms dimers and possibly higher-order oligomers. Post-translationally, N-glycosylated, but not all potential glycosylation sites may be used. Contains high-mannose type oligosaccharides. In terms of processing, phosphorylated at Ser-1881 in mitosis specifically; not phosphorylated in interphase. In terms of tissue distribution, ubiquitous expression, with highest levels in lung, liver, pancreas, testis, and ovary, intermediate levels in brain, kidney, and spleen, and lowest levels in heart and skeletal muscle.

The protein localises to the nucleus. It localises to the nuclear pore complex. The protein resides in the nucleus membrane. Its subcellular location is the endoplasmic reticulum membrane. Its function is as follows. Nucleoporin essential for nuclear pore assembly and fusion, nuclear pore spacing, as well as structural integrity. The chain is Nuclear pore membrane glycoprotein 210 (NUP210) from Homo sapiens (Human).